A 306-amino-acid chain; its full sequence is Pantothenate synthetase (306 aa).

37–44 (MGALHEGH) provides a ligand contact to ATP. Histidine 44 functions as the Proton donor in the catalytic mechanism. Residue glutamine 69 coordinates (R)-pantoate. Glutamine 69 lines the beta-alanine pocket. ATP is bound at residue 155–158 (GEKD). A (R)-pantoate-binding site is contributed by glutamine 161. ATP-binding positions include valine 184 and 192–195 (KSSR).

This sequence belongs to the pantothenate synthetase family. Homodimer.

It localises to the cytoplasm. The enzyme catalyses (R)-pantoate + beta-alanine + ATP = (R)-pantothenate + AMP + diphosphate + H(+). Its pathway is cofactor biosynthesis; (R)-pantothenate biosynthesis; (R)-pantothenate from (R)-pantoate and beta-alanine: step 1/1. Functionally, catalyzes the condensation of pantoate with beta-alanine in an ATP-dependent reaction via a pantoyl-adenylate intermediate. This is Pantothenate synthetase from Corynebacterium jeikeium (strain K411).